Consider the following 219-residue polypeptide: Kappa-scoloptoxin(11)-Ss1a (219 aa).

Positions 1-16 (MFYSHLLFFTFTFACS) are cleaved as a signal peptide. Positions 17-25 (SSLNRKTKR) are excised as a propeptide.

In terms of processing, contains 8 disulfide bonds. As to expression, expressed by the venom gland.

It localises to the secreted. Voltage-gated potassium channel inhibitor. This chain is Kappa-scoloptoxin(11)-Ss1a, found in Scolopendra dehaani (Thai centipede).